Reading from the N-terminus, the 217-residue chain is MEIERINEDTIKFYISYLDLEERGFNQEDVWYDREKSEELFWDMMDELKYEEEFSPEGPLWIQVQALKHGLEVFVTKATIGGKGEDGFDVTLSSPDELAEEKIEKLLEENFNPVKKESLGEDDTLEFILEFRDFEDVISLSRATGLENLLTKLYSYQGKYYLNVEFPENKYDESNIDNAVSILLEYGLESNLTGYMLAEYGKVIFDVPALQQVRKHF.

It belongs to the MecA family. Homodimer.

In terms of biological role, enables the recognition and targeting of unfolded and aggregated proteins to the ClpC protease or to other proteins involved in proteolysis. This chain is Adapter protein MecA, found in Listeria welshimeri serovar 6b (strain ATCC 35897 / DSM 20650 / CCUG 15529 / CIP 8149 / NCTC 11857 / SLCC 5334 / V8).